We begin with the raw amino-acid sequence, 447 residues long: Putative vacuolar cation/proton exchanger 4 (447 aa).

The disordered stretch occupies residues 1-29; that stretch reads MDKSEMDKINGTNPESTDQAPSLASRPDE. Over 1–65 the chain is Cytoplasmic; sequence MDKSEMDKIN…VNWGVFGSMK (65 aa). A compositionally biased stretch (polar residues) spans 10–22; it reads NGTNPESTDQAPS. The helical transmembrane segment at 66-86 threads the bilayer; sequence IVFLKSKLNVLIPCGFLAIFL. The Extracellular segment spans residues 87 to 93; the sequence is NYMTQRY. The helical transmembrane segment at 94–114 threads the bilayer; sequence GWVFPLSMLGIIPLAERLGFA. Over 115–122 the chain is Cytoplasmic; it reads TDWQISCE. A helical membrane pass occupies residues 123–143; sequence VGRLLNSAFGNATELIISIHA. The tract at residues 132–167 is cation selection; the sequence is GNATELIISIHALSRGKLHVVQQCLLGSILSNLLLV. The Extracellular portion of the chain corresponds to 144–159; the sequence is LSRGKLHVVQQCLLGS. The helical transmembrane segment at 160–180 threads the bilayer; the sequence is ILSNLLLVLGSAFFSGGLACG. At 181–190 the chain is on the cytoplasmic side; sequence KTMQTFSKAD. The helical transmembrane segment at 191 to 211 threads the bilayer; that stretch reads AVVNSGLLLMAVMGLLIPAAL. Residues 212–224 are Extracellular-facing; sequence HYTHSEAQFGKSE. Residues 225 to 245 form a helical membrane-spanning segment; sequence LALSRFSSCIMLVAYASYLYF. At 246 to 286 the chain is on the cytoplasmic side; that stretch reads QLSNNRRRNEANVYPCMPLIKRRIQDDVDGNDDEVPEISKR. A helical membrane pass occupies residues 287-307; it reads EAISWIAIFIAWISMLSYYLV. The Extracellular segment spans residues 308–318; the sequence is DAIDGASKAWN. The helical transmembrane segment at 319–339 threads the bilayer; it reads IPVAFISVVLLPVVGNSAGHA. The tract at residues 333–368 is cation selection; that stretch reads GNSAGHANAVMFAVKDKLDISLGVAIGSSIQISMFG. The Cytoplasmic portion of the chain corresponds to 340–353; that stretch reads NAVMFAVKDKLDIS. The chain crosses the membrane as a helical span at residues 354–374; the sequence is LGVAIGSSIQISMFGIPFCVV. Topologically, residues 375 to 384 are extracellular; it reads MGWMMGKPMD. The chain crosses the membrane as a helical span at residues 385–405; the sequence is LNFHLFETASLLTTVLVVAFL. The Cytoplasmic segment spans residues 406 to 413; the sequence is LQDGTSNC. A helical transmembrane segment spans residues 414 to 434; the sequence is VKGLMLFLCYLIVAASFYVHA. Residues 435 to 447 lie on the Extracellular side of the membrane; that stretch reads DPNSKASEKPPQN.

It belongs to the Ca(2+):cation antiporter (CaCA) (TC 2.A.19) family. Cation/proton exchanger (CAX) subfamily.

It localises to the vacuole membrane. Its function is as follows. Vacuolar cation/proton exchanger (CAX). Translocates Ca(2+) and other metal ions into vacuoles using the proton gradient formed by H(+)-ATPase and H(+)-pyrophosphatase. In Oryza sativa subsp. japonica (Rice), this protein is Putative vacuolar cation/proton exchanger 4.